A 196-amino-acid chain; its full sequence is Proteasome subunit beta (196 aa).

Residue methionine 1 is a propeptide, removed in mature form; by autocatalysis. Catalysis depends on threonine 2, which acts as the Nucleophile.

It belongs to the peptidase T1B family. The 20S proteasome core is composed of 14 alpha and 14 beta subunits that assemble into four stacked heptameric rings, resulting in a barrel-shaped structure. The two inner rings, each composed of seven catalytic beta subunits, are sandwiched by two outer rings, each composed of seven alpha subunits. The catalytic chamber with the active sites is on the inside of the barrel. Has a gated structure, the ends of the cylinder being occluded by the N-termini of the alpha-subunits. Is capped at one or both ends by the proteasome regulatory ATPase, PAN.

The protein localises to the cytoplasm. It catalyses the reaction Cleavage of peptide bonds with very broad specificity.. The formation of the proteasomal ATPase PAN-20S proteasome complex, via the docking of the C-termini of PAN into the intersubunit pockets in the alpha-rings, triggers opening of the gate for substrate entry. Interconversion between the open-gate and close-gate conformations leads to a dynamic regulation of the 20S proteasome proteolysis activity. Functionally, component of the proteasome core, a large protease complex with broad specificity involved in protein degradation. The chain is Proteasome subunit beta from Nanoarchaeum equitans (strain Kin4-M).